Reading from the N-terminus, the 232-residue chain is Octanoyltransferase (232 aa).

Positions 40–226 (GSAPERVWLL…TWQDLFGSVP (187 aa)) constitute a BPL/LPL catalytic domain. Substrate-binding positions include 79-86 (RGGQWTYH), 157-159 (ALG), and 170-172 (GVA). Cysteine 188 serves as the catalytic Acyl-thioester intermediate.

Belongs to the LipB family.

The protein localises to the cytoplasm. The catalysed reaction is octanoyl-[ACP] + L-lysyl-[protein] = N(6)-octanoyl-L-lysyl-[protein] + holo-[ACP] + H(+). It participates in protein modification; protein lipoylation via endogenous pathway; protein N(6)-(lipoyl)lysine from octanoyl-[acyl-carrier-protein]: step 1/2. Functionally, catalyzes the transfer of endogenously produced octanoic acid from octanoyl-acyl-carrier-protein onto the lipoyl domains of lipoate-dependent enzymes. Lipoyl-ACP can also act as a substrate although octanoyl-ACP is likely to be the physiological substrate. This Gluconacetobacter diazotrophicus (strain ATCC 49037 / DSM 5601 / CCUG 37298 / CIP 103539 / LMG 7603 / PAl5) protein is Octanoyltransferase.